We begin with the raw amino-acid sequence, 98 residues long: NADH-ubiquinone oxidoreductase chain 4L (98 aa).

The next 3 membrane-spanning stretches (helical) occupy residues 1 to 21 (MSLV…GLLM), 25 to 45 (HLMS…VMAT), and 59 to 81 (MPII…LVMV).

It belongs to the complex I subunit 4L family. In terms of assembly, core subunit of respiratory chain NADH dehydrogenase (Complex I) which is composed of 45 different subunits.

The protein resides in the mitochondrion inner membrane. The catalysed reaction is a ubiquinone + NADH + 5 H(+)(in) = a ubiquinol + NAD(+) + 4 H(+)(out). Core subunit of the mitochondrial membrane respiratory chain NADH dehydrogenase (Complex I) which catalyzes electron transfer from NADH through the respiratory chain, using ubiquinone as an electron acceptor. Part of the enzyme membrane arm which is embedded in the lipid bilayer and involved in proton translocation. In Equus caballus (Horse), this protein is NADH-ubiquinone oxidoreductase chain 4L (MT-ND4L).